Reading from the N-terminus, the 371-residue chain is Probable trehalose-phosphate phosphatase 1 (371 aa).

The protein belongs to the trehalose phosphatase family. Requires a divalent metal cation as cofactor. As to expression, expressed in roots and shoots.

It carries out the reaction alpha,alpha-trehalose 6-phosphate + H2O = alpha,alpha-trehalose + phosphate. Its pathway is glycan biosynthesis; trehalose biosynthesis. Removes the phosphate from trehalose 6-phosphate to produce free trehalose. Trehalose accumulation in plant improves abiotic stress tolerance. The chain is Probable trehalose-phosphate phosphatase 1 (TPP1) from Oryza sativa subsp. japonica (Rice).